The sequence spans 442 residues: MMRSLYSGVSGLQNHQTRMDVVGNNIANVNTIGFKKGRVNFQDMISQSISGASRPTDARGGTNPKQVGLGMNVASIDTIHTQGAFQSTQKASDLGVSGNGFFILKEGKNLFYTRAGAFDVDSDRHLVNPANGMRIQGWMARDLEGEKVINTASDIEDLIIPIGDKEGAKSTKNVTFACNLDKRLPLIQEGANPADIARGTWVVNKSLYDSFGNVSVLELRVVKDLNTPNLWNATVLINGEQNSNFTLGFDNEGALASLNGQPGQKGDILQIPITFNVLGANVGEVGEQQTVNLKLGTVGSYTDSITQFADSSSTKAIIQDGYGMGYMENYEIDQNGVIVGIYSNGIRRDLGKIALASFMNPGGLAKSGDTNFVETSNSGQVRIGETGLAGLGDIRSGVLEMANVDLAEQFTDMIVTQRGFQANAKTITTSDQLLQELVRLKN.

Belongs to the flagella basal body rod proteins family.

It is found in the bacterial flagellum basal body. In Borreliella burgdorferi (strain ATCC 35210 / DSM 4680 / CIP 102532 / B31) (Borrelia burgdorferi), this protein is Flagellar hook protein FlgE (flgE).